The primary structure comprises 332 residues: Beta-ketoacyl-[acyl-carrier-protein] synthase III (332 aa).

Catalysis depends on residues C116 and H257. The segment at 258–262 (QANQR) is ACP-binding. N287 is an active-site residue.

This sequence belongs to the thiolase-like superfamily. FabH family. Homodimer.

It is found in the cytoplasm. The catalysed reaction is malonyl-[ACP] + acetyl-CoA + H(+) = 3-oxobutanoyl-[ACP] + CO2 + CoA. It functions in the pathway lipid metabolism; fatty acid biosynthesis. Catalyzes the condensation reaction of fatty acid synthesis by the addition to an acyl acceptor of two carbons from malonyl-ACP. Catalyzes the first condensation reaction which initiates fatty acid synthesis and may therefore play a role in governing the total rate of fatty acid production. Possesses both acetoacetyl-ACP synthase and acetyl transacylase activities. Its substrate specificity determines the biosynthesis of branched-chain and/or straight-chain of fatty acids. The protein is Beta-ketoacyl-[acyl-carrier-protein] synthase III of Acaryochloris marina (strain MBIC 11017).